Here is a 280-residue protein sequence, read N- to C-terminus: uncharacterized protein (280 aa).

To E.coli YgfZ (UP14) and B.aphidicola (subsp. Acyrthosiphon pisum) BU435.

This is an uncharacterized protein from Haemophilus influenzae (strain ATCC 51907 / DSM 11121 / KW20 / Rd).